Reading from the N-terminus, the 412-residue chain is Adenosine receptor A2a (412 aa).

The Extracellular segment spans residues 1–7 (MPIMGSS). The helical transmembrane segment at 8–32 (VYITVELAIAVLAILGNVLVCWAVW) threads the bilayer. Residues 33 to 42 (LNSNLQNVTN) lie on the Cytoplasmic side of the membrane. A helical membrane pass occupies residues 43–66 (YFVVSLAAADIAVGVLAIPFAITI). The Extracellular portion of the chain corresponds to 67-77 (STGFCAACHGC). 3 disulfide bridges follow: Cys-71–Cys-159, Cys-74–Cys-146, and Cys-77–Cys-166. A helical membrane pass occupies residues 78-100 (LFIACFVLVLTQSSIFSLLAIAI). Residues 101–120 (DRYIAIRIPLRYNGLVTGTR) are Cytoplasmic-facing. The chain crosses the membrane as a helical span at residues 121–143 (AKGIIAICWVLSFAIGLTPMLGW). Residues 144-173 (NNCGQPKEGKNHSQGCGEGQVACLFEDVVP) lie on the Extracellular side of the membrane. The N-linked (GlcNAc...) asparagine glycan is linked to Asn-154. Glu-169 contacts adenosine. A helical transmembrane segment spans residues 174-198 (MNYMVYFNFFACVLVPLLLMLGVYL). Residues 199-234 (RIFLAARRQLKQMESQPLPGERARSTLQKEVHAAKS) are Cytoplasmic-facing. Residues 235–258 (LAIIVGLFALCWLPLHIINCFTFF) form a helical membrane-spanning segment. Asn-253 is a binding site for adenosine. A disulfide bond links Cys-259 and Cys-262. The Extracellular portion of the chain corresponds to 259–266 (CPDCSHAP). The helical transmembrane segment at 267 to 290 (LWLMYLAIVLSHTNSVVNPFIYAY) threads the bilayer. Adenosine contacts are provided by Ser-277 and His-278. The Cytoplasmic segment spans residues 291–412 (RIREFRQTFR…PLAQDGAGVS (122 aa)). The interval 391-412 (KGVCPEPPGLDDPLAQDGAGVS) is disordered.

This sequence belongs to the G-protein coupled receptor 1 family. In terms of assembly, interacts (via cytoplasmic C-terminal domain) with USP4; the interaction is direct. May interact with DRD4. Interacts with NECAB2. Interacts (via cytoplasmic C-terminal domain) with GAS2L2; interaction enhances receptor-mediated adenylyl cyclase activity. Ubiquitinated. Deubiquitinated by USP4; leading to stabilization and expression at the cell surface.

It localises to the cell membrane. Functionally, receptor for adenosine. The activity of this receptor is mediated by G proteins which activate adenylyl cyclase. This Homo sapiens (Human) protein is Adenosine receptor A2a (ADORA2A).